Reading from the N-terminus, the 40-residue chain is TITPSLKGFFIGLLSGAVVLGLTFAVLIAISQIDKVQRSL.

Residues 1–11 (TITPSLKGFFI) are Lumenal-facing. Residues 12-28 (GLLSGAVVLGLTFAVLI) traverse the membrane as a helical segment. Topologically, residues 29-40 (AISQIDKVQRSL) are cytoplasmic.

It belongs to the PsbX family. Type 1 subfamily. In terms of assembly, PSII is composed of 1 copy each of membrane proteins PsbA, PsbB, PsbC, PsbD, PsbE, PsbF, PsbH, PsbI, PsbJ, PsbK, PsbL, PsbM, PsbT, PsbX, PsbY, PsbZ, Psb30/Ycf12, peripheral proteins PsbO, CyanoQ (PsbQ), PsbU, PsbV and a large number of cofactors. It forms dimeric complexes. Requires PSII binds multiple chlorophylls, carotenoids and specific lipids. as cofactor.

Its subcellular location is the cellular thylakoid membrane. Functionally, involved in the binding and/or turnover of quinones at the Q(B) site of photosystem II (PSII). PSII is a light-driven water plastoquinone oxidoreductase, using light energy to abstract electrons from H(2)O, generating a proton gradient subsequently used for ATP formation. The sequence is that of Photosystem II reaction center protein X from Thermostichus vulcanus (Synechococcus vulcanus).